We begin with the raw amino-acid sequence, 75 residues long: UPF0270 protein PFLU_4323 (75 aa).

The protein belongs to the UPF0270 family.

In Pseudomonas fluorescens (strain SBW25), this protein is UPF0270 protein PFLU_4323.